We begin with the raw amino-acid sequence, 102 residues long: A-type ATP synthase subunit F (102 aa).

The protein belongs to the V-ATPase F subunit family. Has multiple subunits with at least A(3), B(3), C, D, E, F, H, I and proteolipid K(x).

The protein localises to the cell membrane. Component of the A-type ATP synthase that produces ATP from ADP in the presence of a proton gradient across the membrane. This is A-type ATP synthase subunit F from Thermococcus gammatolerans (strain DSM 15229 / JCM 11827 / EJ3).